A 387-amino-acid polypeptide reads, in one-letter code: Putative 8-amino-7-oxononanoate synthase (387 aa).

Arginine 19 provides a ligand contact to substrate. Pyridoxal 5'-phosphate is bound at residue 107–108 (GY). Histidine 132 contacts substrate. Pyridoxal 5'-phosphate contacts are provided by residues serine 180, 206-209 (DEAH), and 237-240 (TFGK). N6-(pyridoxal phosphate)lysine is present on lysine 240. Substrate is bound at residue threonine 354.

Belongs to the class-II pyridoxal-phosphate-dependent aminotransferase family. BioF subfamily. In terms of assembly, homodimer. Pyridoxal 5'-phosphate is required as a cofactor.

It catalyses the reaction 6-carboxyhexanoyl-[ACP] + L-alanine + H(+) = (8S)-8-amino-7-oxononanoate + holo-[ACP] + CO2. It functions in the pathway cofactor biosynthesis; biotin biosynthesis. Catalyzes the decarboxylative condensation of pimeloyl-[acyl-carrier protein] and L-alanine to produce 8-amino-7-oxononanoate (AON), [acyl-carrier protein], and carbon dioxide. The protein is Putative 8-amino-7-oxononanoate synthase (bioF) of Pasteurella multocida (strain Pm70).